We begin with the raw amino-acid sequence, 396 residues long: Ribosomal RNA large subunit methyltransferase I (396 aa).

Positions 2–81 (SVRLVLAKGR…ESIDIAFFTR (80 aa)) constitute a PUA domain.

This sequence belongs to the methyltransferase superfamily. RlmI family.

It is found in the cytoplasm. It catalyses the reaction cytidine(1962) in 23S rRNA + S-adenosyl-L-methionine = 5-methylcytidine(1962) in 23S rRNA + S-adenosyl-L-homocysteine + H(+). Specifically methylates the cytosine at position 1962 (m5C1962) of 23S rRNA. This chain is Ribosomal RNA large subunit methyltransferase I, found in Escherichia coli O1:K1 / APEC.